The primary structure comprises 475 residues: LEC14B homolog (475 aa).

Positions 1-34 are disordered; the sequence is MSYRTRFGKDNSACDSGNAVEGSGSSKGPNEVSN. A compositionally biased stretch (polar residues) spans 23 to 33; the sequence is SGSSKGPNEVS. WD repeat units lie at residues 211-240, 252-283, 299-329, 375-411, and 423-453; these read DEFG…YVYD, AHSS…KVWD, GHLE…QLWD, GHGV…YIYD, and HHEG…ARWE.

This sequence belongs to the WD repeat LEC14B family.

The chain is LEC14B homolog from Prunus armeniaca (Apricot).